Reading from the N-terminus, the 391-residue chain is F-box/kelch-repeat protein At4g05080 (391 aa).

The region spanning 2 to 49 (TMMFDLTQDLVKEILSRVPITSLGAVRSTCKGWNALSKDRILCKAKPK) is the F-box domain. Kelch repeat units lie at residues 100–143 (HMYY…TFCL) and 144–194 (RYDN…SASV). Over residues 369–385 (RRRRERNSKRKEKKRKG) the composition is skewed to basic residues. The segment at 369–391 (RRRRERNSKRKEKKRKGTTNNKV) is disordered.

The protein is F-box/kelch-repeat protein At4g05080 of Arabidopsis thaliana (Mouse-ear cress).